The chain runs to 793 residues: Probable phosphoketolase (793 aa).

This sequence belongs to the XFP family. Thiamine diphosphate serves as cofactor.

The polypeptide is Probable phosphoketolase (Streptomyces avermitilis (strain ATCC 31267 / DSM 46492 / JCM 5070 / NBRC 14893 / NCIMB 12804 / NRRL 8165 / MA-4680)).